We begin with the raw amino-acid sequence, 294 residues long: GTPase Era (294 aa).

Positions 2–171 (NSGVVTIIGR…LSLLIELLPE (170 aa)) constitute an Era-type G domain. The tract at residues 10–17 (GRPSAGKS) is G1. 10-17 (GRPSAGKS) lines the GTP pocket. The G2 stretch occupies residues 36–40 (QTTRN). A G3 region spans residues 57–60 (DTPG). GTP is bound by residues 57–61 (DTPGY) and 119–122 (NKAD). Residues 119 to 122 (NKAD) form a G4 region. The interval 150–152 (ISA) is G5. The region spanning 202–280 (TREEIPHALY…QLDLQVRVNK (79 aa)) is the KH type-2 domain.

The protein belongs to the TRAFAC class TrmE-Era-EngA-EngB-Septin-like GTPase superfamily. Era GTPase family. In terms of assembly, monomer.

The protein localises to the cytoplasm. The protein resides in the cell inner membrane. Its function is as follows. An essential GTPase that binds both GDP and GTP, with rapid nucleotide exchange. Plays a role in 16S rRNA processing and 30S ribosomal subunit biogenesis and possibly also in cell cycle regulation and energy metabolism. The sequence is that of GTPase Era from Treponema denticola (strain ATCC 35405 / DSM 14222 / CIP 103919 / JCM 8153 / KCTC 15104).